The primary structure comprises 1149 residues: Nitric oxide synthase, inducible (1149 aa).

A disordered region spans residues 22-83; it reads KDINNNVGKA…HKPSPTCSQH (62 aa). The DINNN-motif; mediates interaction with SPSB1, SPSB2 and SPSB4 signature appears at 23–27; it reads DINNN. Positions 50 to 61 are enriched in polar residues; the sequence is KHQNGSSQSLTG. Positions 109 and 114 each coordinate Zn(2+). Ser-117 is a (6R)-L-erythro-5,6,7,8-tetrahydrobiopterin binding site. Cys-199 contacts heme b. Positions 262, 371, 372, and 376 each coordinate L-arginine. (6R)-L-erythro-5,6,7,8-tetrahydrobiopterin contacts are provided by Arg-380, Ile-461, Trp-462, and Phe-475. Tyr-490 provides a ligand contact to heme b. A calmodulin-binding region spans residues 514-534; the sequence is FRVLAKATLFASLLMRKMMAS. In terms of domain architecture, Flavodoxin-like spans 538-676; it reads ATILFATETG…AFCTWAVQTF (139 aa). 5 residues coordinate FMN: Thr-544, Glu-545, Thr-546, Lys-548, and Ser-549. Tyr-574 carries the phosphotyrosine modification. The FMN site is built by Ser-590, Thr-591, Ser-627, Arg-632, Cys-634, Glu-660, and Gln-664. In terms of domain architecture, FAD-binding FR-type spans 729-969; it reads TDVFTMRLKS…VRSVNSFQLP (241 aa). Arg-749 is an NADP(+) binding site. FAD contacts are provided by His-771, Arg-905, Tyr-907, Ser-908, Thr-923, and Ala-925. Thr-928 serves as a coordination point for NADP(+). Positions 929, 942, 943, and 944 each coordinate FAD. NADP(+) contacts are provided by Thr-983, Arg-1016, Ser-1045, Arg-1046, Lys-1052, Tyr-1054, Gln-1056, and Asp-1089.

This sequence belongs to the NOS family. In terms of assembly, homodimer. Interacts with NHERF1. Interacts with GAPDH; induced by oxidatively-modified low-densitity lipoprotein (LDL(ox)). Interacts with S100A8 and S100A9 to form the iNOS-S100A8/9 transnitrosylase complex. Interacts with SPSB1, SPSB2 and SPSB4. Interacts with ELOC and CUL5 in the presence of SPSB1 or SPSB2 or SPSB4. Forms a complex with ASL, ASS1 and HSP90AA1; the complex regulates cell-autonomous L-arginine synthesis and citrulline recycling while channeling extracellular L-arginine to nitric oxide synthesis pathway. The cofactor is heme b. Requires FAD as cofactor. It depends on FMN as a cofactor. (6R)-L-erythro-5,6,7,8-tetrahydrobiopterin serves as cofactor. Post-translationally, polyubiquitinated; mediated by SPSB1, SPSB2 and SPSB4, leading to proteasomal degradation. In terms of tissue distribution, expressed in the lung and colon. Not detected in the heart, aorta, liver, kidney, and spleen.

It is found in the cytoplasm. The protein localises to the cytosol. It carries out the reaction 2 L-arginine + 3 NADPH + 4 O2 + H(+) = 2 L-citrulline + 2 nitric oxide + 3 NADP(+) + 4 H2O. Regulated by calcium/calmodulin. Functionally, produces nitric oxide (NO) which is a messenger molecule with diverse functions throughout the body. In macrophages, NO mediates tumoricidal and bactericidal actions. Also has nitrosylase activity and mediates cysteine S-nitrosylation of cytoplasmic target proteins such PTGS2/COX2. As component of the iNOS-S100A8/9 transnitrosylase complex involved in the selective inflammatory stimulus-dependent S-nitrosylation of GAPDH implicated in regulation of the GAIT complex activity and probably multiple targets including ANXA5, EZR, MSN and VIM. Involved in inflammation, enhances the synthesis of pro-inflammatory mediators such as IL6 and IL8. This chain is Nitric oxide synthase, inducible (NOS2), found in Cavia porcellus (Guinea pig).